The chain runs to 493 residues: Bifunctional protein GlmU (493 aa).

The segment at 1-246 (MTGELDVDGE…SWLVAGINDR (246 aa)) is pyrophosphorylase. UDP-N-acetyl-alpha-D-glucosamine contacts are provided by residues 21–24 (LAAG), K35, Q88, 93–94 (GT), 117–119 (SGD), G156, E171, N186, and N244. D119 is a binding site for Mg(2+). A Mg(2+)-binding site is contributed by N244. Residues 247-267 (VQLTAAATELNARIIRRWQLA) form a linker region. The N-acetyltransferase stretch occupies residues 268 to 493 (GVTIHDPRTT…DGPADDASDA (226 aa)). R349 and K367 together coordinate UDP-N-acetyl-alpha-D-glucosamine. Residue H379 is the Proton acceptor of the active site. Residues Y382 and N393 each contribute to the UDP-N-acetyl-alpha-D-glucosamine site. Acetyl-CoA-binding positions include A396, 402 to 403 (NY), S421, and A439. Residues 470 to 493 (RPGTPEARAAVEAADGPADDASDA) are disordered.

In the N-terminal section; belongs to the N-acetylglucosamine-1-phosphate uridyltransferase family. It in the C-terminal section; belongs to the transferase hexapeptide repeat family. In terms of assembly, homotrimer. It depends on Mg(2+) as a cofactor.

The protein resides in the cytoplasm. The enzyme catalyses alpha-D-glucosamine 1-phosphate + acetyl-CoA = N-acetyl-alpha-D-glucosamine 1-phosphate + CoA + H(+). The catalysed reaction is N-acetyl-alpha-D-glucosamine 1-phosphate + UTP + H(+) = UDP-N-acetyl-alpha-D-glucosamine + diphosphate. The protein operates within nucleotide-sugar biosynthesis; UDP-N-acetyl-alpha-D-glucosamine biosynthesis; N-acetyl-alpha-D-glucosamine 1-phosphate from alpha-D-glucosamine 6-phosphate (route II): step 2/2. Its pathway is nucleotide-sugar biosynthesis; UDP-N-acetyl-alpha-D-glucosamine biosynthesis; UDP-N-acetyl-alpha-D-glucosamine from N-acetyl-alpha-D-glucosamine 1-phosphate: step 1/1. It participates in bacterial outer membrane biogenesis; LPS lipid A biosynthesis. In terms of biological role, catalyzes the last two sequential reactions in the de novo biosynthetic pathway for UDP-N-acetylglucosamine (UDP-GlcNAc). The C-terminal domain catalyzes the transfer of acetyl group from acetyl coenzyme A to glucosamine-1-phosphate (GlcN-1-P) to produce N-acetylglucosamine-1-phosphate (GlcNAc-1-P), which is converted into UDP-GlcNAc by the transfer of uridine 5-monophosphate (from uridine 5-triphosphate), a reaction catalyzed by the N-terminal domain. The polypeptide is Bifunctional protein GlmU (Clavibacter sepedonicus (Clavibacter michiganensis subsp. sepedonicus)).